A 481-amino-acid chain; its full sequence is Arylsulfatase (481 aa).

Positions 11, 12, and 51 each coordinate Ca(2+). Cysteine 51 serves as the catalytic Nucleophile. A 3-oxoalanine (Cys) modification is found at cysteine 51. Histidine 102 is an active-site residue. Residues aspartate 302 and histidine 303 each contribute to the Ca(2+) site.

It belongs to the sulfatase family. Requires Ca(2+) as cofactor. In terms of processing, the conversion to 3-oxoalanine (also known as C-formylglycine, FGly), of a serine or cysteine residue in prokaryotes and of a cysteine residue in eukaryotes, is critical for catalytic activity.

It carries out the reaction an aryl sulfate + H2O = a phenol + sulfate + H(+). Functionally, has sulfatase activity toward para-nitrophenyl sulfate, which is increased in presence of calcium ion. The sequence is that of Arylsulfatase from Clostridium perfringens (strain 13 / Type A).